Reading from the N-terminus, the 167-residue chain is SsrA-binding protein (167 aa).

Positions 139–158 are enriched in basic and acidic residues; the sequence is QNHDKRDAAKDRDWQRDKQR. Residues 139–167 are disordered; that stretch reads QNHDKRDAAKDRDWQRDKQRVMRRHNRDA.

It belongs to the SmpB family.

It localises to the cytoplasm. Required for rescue of stalled ribosomes mediated by trans-translation. Binds to transfer-messenger RNA (tmRNA), required for stable association of tmRNA with ribosomes. tmRNA and SmpB together mimic tRNA shape, replacing the anticodon stem-loop with SmpB. tmRNA is encoded by the ssrA gene; the 2 termini fold to resemble tRNA(Ala) and it encodes a 'tag peptide', a short internal open reading frame. During trans-translation Ala-aminoacylated tmRNA acts like a tRNA, entering the A-site of stalled ribosomes, displacing the stalled mRNA. The ribosome then switches to translate the ORF on the tmRNA; the nascent peptide is terminated with the 'tag peptide' encoded by the tmRNA and targeted for degradation. The ribosome is freed to recommence translation, which seems to be the essential function of trans-translation. The protein is SsrA-binding protein of Xanthomonas euvesicatoria pv. vesicatoria (strain 85-10) (Xanthomonas campestris pv. vesicatoria).